Here is a 155-residue protein sequence, read N- to C-terminus: 6,7-dimethyl-8-ribityllumazine synthase (155 aa).

5-amino-6-(D-ribitylamino)uracil-binding positions include Phe-23, 57 to 59 (AYE), and 81 to 83 (AVI). 86-87 (AT) lines the (2S)-2-hydroxy-3-oxobutyl phosphate pocket. The Proton donor role is filled by His-89. 5-amino-6-(D-ribitylamino)uracil is bound at residue Phe-114. Arg-128 is a (2S)-2-hydroxy-3-oxobutyl phosphate binding site.

This sequence belongs to the DMRL synthase family.

The catalysed reaction is (2S)-2-hydroxy-3-oxobutyl phosphate + 5-amino-6-(D-ribitylamino)uracil = 6,7-dimethyl-8-(1-D-ribityl)lumazine + phosphate + 2 H2O + H(+). The protein operates within cofactor biosynthesis; riboflavin biosynthesis; riboflavin from 2-hydroxy-3-oxobutyl phosphate and 5-amino-6-(D-ribitylamino)uracil: step 1/2. Functionally, catalyzes the formation of 6,7-dimethyl-8-ribityllumazine by condensation of 5-amino-6-(D-ribitylamino)uracil with 3,4-dihydroxy-2-butanone 4-phosphate. This is the penultimate step in the biosynthesis of riboflavin. The chain is 6,7-dimethyl-8-ribityllumazine synthase from Desulfotalea psychrophila (strain LSv54 / DSM 12343).